The following is a 623-amino-acid chain: Activator of C kinase protein 1 (623 aa).

A disordered region spans residues 141-230; the sequence is KESLGSPAVQ…GSSGGEDKLS (90 aa). Residues 152 to 161 are compositionally biased toward polar residues; that stretch reads ASISSGNRIS. Basic and acidic residues predominate over residues 176 to 193; sequence SESRILQEKVYRTEEKAP. Residues Lys184 and Lys191 each participate in a glycyl lysine isopeptide (Lys-Gly) (interchain with G-Cter in ubiquitin) cross-link. Residues 206–215 are compositionally biased toward polar residues; the sequence is KINQPPTGSA. Sel1-like repeat units follow at residues 318-361, 408-444, 495-531, and 576-611; these read PPAM…KLNN, SACMYKLGMSHLYGLNMQKTDVLLAIKWFDKAAQKGD, PLAQWKLGNCYEFGDLGLPVVAKKSIYWYSKAAAAQP, and ARTEFALGFYYEKGVGCEVDLDLAKQYYQRAARMGF.

The chain is Activator of C kinase protein 1 (ACK1) from Saccharomyces cerevisiae (strain ATCC 204508 / S288c) (Baker's yeast).